The sequence spans 106 residues: Malonate decarboxylase acyl carrier protein (106 aa).

At S28 the chain carries O-(phosphoribosyl dephospho-coenzyme A)serine.

This sequence belongs to the MdcC family. Post-translationally, covalently binds the prosthetic group of malonate decarboxylase.

It is found in the cytoplasm. Functionally, subunit of malonate decarboxylase, it is an acyl carrier protein to which acetyl and malonyl thioester residues are bound via a 2'-(5''-phosphoribosyl)-3'-dephospho-CoA prosthetic group and turn over during the catalytic mechanism. This Stenotrophomonas maltophilia (strain R551-3) protein is Malonate decarboxylase acyl carrier protein.